The chain runs to 852 residues: Lon protease homolog 2, peroxisomal (852 aa).

Ser2 is subject to N-acetylserine. A Lon N-terminal domain is found at 13–222; it reads LPLLLTHEGV…MTIPLLVRQI (210 aa). Residue 375-382 participates in ATP binding; it reads GPPGVGKT. Residues 651-837 form the Lon proteolytic domain; sequence LSQPGVAIGL…DEVLNAAFDG (187 aa). Residues Ser743 and Lys786 contribute to the active site. The Microbody targeting signal motif lies at 850-852; sequence SKL.

Belongs to the peptidase S16 family. In terms of assembly, interacts with PEX5. Interacts with TYSND1. May interact with enzymes involved in beta-oxidation of fatty acids, including ACOX1/AOX.

The protein localises to the peroxisome matrix. It carries out the reaction Hydrolysis of proteins in presence of ATP.. Its function is as follows. ATP-dependent serine protease that mediates the selective degradation of misfolded and unassembled polypeptides in the peroxisomal matrix. Necessary for type 2 peroxisome targeting signal (PTS2)-containing protein processing and facilitates peroxisome matrix protein import. May indirectly regulate peroxisomal fatty acid beta-oxidation through degradation of the self-processed forms of TYSND1. In Pongo abelii (Sumatran orangutan), this protein is Lon protease homolog 2, peroxisomal.